The chain runs to 262 residues: Acyl-[acyl-carrier-protein]--UDP-N-acetylglucosamine O-acyltransferase (262 aa).

It belongs to the transferase hexapeptide repeat family. LpxA subfamily. In terms of assembly, homotrimer.

The protein resides in the cytoplasm. The catalysed reaction is a (3R)-hydroxyacyl-[ACP] + UDP-N-acetyl-alpha-D-glucosamine = a UDP-3-O-[(3R)-3-hydroxyacyl]-N-acetyl-alpha-D-glucosamine + holo-[ACP]. Its pathway is glycolipid biosynthesis; lipid IV(A) biosynthesis; lipid IV(A) from (3R)-3-hydroxytetradecanoyl-[acyl-carrier-protein] and UDP-N-acetyl-alpha-D-glucosamine: step 1/6. In terms of biological role, involved in the biosynthesis of lipid A, a phosphorylated glycolipid that anchors the lipopolysaccharide to the outer membrane of the cell. This chain is Acyl-[acyl-carrier-protein]--UDP-N-acetylglucosamine O-acyltransferase, found in Burkholderia multivorans (strain ATCC 17616 / 249).